The following is a 340-amino-acid chain: Phosphate acyltransferase (340 aa).

Belongs to the PlsX family. Homodimer. Probably interacts with PlsY.

Its subcellular location is the cytoplasm. The enzyme catalyses a fatty acyl-[ACP] + phosphate = an acyl phosphate + holo-[ACP]. It functions in the pathway lipid metabolism; phospholipid metabolism. Functionally, catalyzes the reversible formation of acyl-phosphate (acyl-PO(4)) from acyl-[acyl-carrier-protein] (acyl-ACP). This enzyme utilizes acyl-ACP as fatty acyl donor, but not acyl-CoA. The chain is Phosphate acyltransferase from Clostridioides difficile (strain 630) (Peptoclostridium difficile).